The sequence spans 174 residues: Small ribosomal subunit protein uS5c (174 aa).

One can recognise an S5 DRBM domain in the interval 17–80 (WEERVVQVKR…TDAKKHLVTV (64 aa)).

It belongs to the universal ribosomal protein uS5 family. In terms of assembly, part of the 30S ribosomal subunit. Contacts protein S4.

The protein localises to the plastid. Its subcellular location is the chloroplast. In terms of biological role, with S4 and S12 plays an important role in translational accuracy. This Porphyra purpurea (Red seaweed) protein is Small ribosomal subunit protein uS5c (rps5).